We begin with the raw amino-acid sequence, 492 residues long: Solute carrier family 2, facilitated glucose transporter member 1 (492 aa).

Position 1 is an N-acetylmethionine (Met1). Over 1–11 the chain is Cytoplasmic; that stretch reads MEPTSKKLTGR. Residues 12–33 form a helical membrane-spanning segment; sequence LMLAVGGAVLGSLQFGYNTGVI. Over 34–66 the chain is Extracellular; sequence NAPQKVIEEFYNQTWVQRYGEPIPPATLTTLWS. N-linked (GlcNAc...) asparagine glycosylation occurs at Asn45. The chain crosses the membrane as a helical span at residues 67-87; the sequence is LSVAIFSVGGMIGSFSVGLFV. Residues 88-90 are Cytoplasmic-facing; the sequence is NRF. Residues 91 to 112 traverse the membrane as a helical segment; sequence GRRNSMLMMNLLAFVSAVLMGF. The Extracellular portion of the chain corresponds to 113 to 120; that stretch reads SKLGKSFE. A helical transmembrane segment spans residues 121–144; sequence MLILGRFIIGVYCGLTTGFVPMYV. Residues 145-155 are Cytoplasmic-facing; that stretch reads GEVSPTELRGA. Residues 156 to 176 form a helical membrane-spanning segment; it reads LGTLHQLGIVVGILIAQVFGL. Gln161 lines the D-glucose pocket. The Extracellular portion of the chain corresponds to 177–185; that stretch reads DSIMGNQEL. Residues 186 to 206 form a helical membrane-spanning segment; the sequence is WPLLLSVIFIPALLQCILLPF. Residues 207 to 271 lie on the Cytoplasmic side of the membrane; that stretch reads CPESPRFLLI…LFRSAAYRQP (65 aa). The residue at position 226 (Ser226) is a Phosphoserine. Residues 272–293 traverse the membrane as a helical segment; the sequence is ILIAVVLQLSQQLSGINAVFYY. D-glucose is bound by residues 282–283 and Asn288; that span reads QQ. Topologically, residues 294–306 are extracellular; sequence STSIFEKAGVQQP. Residues 307–328 form a helical membrane-spanning segment; the sequence is VYATIGSGIVNTAFTVVSLFVV. A D-glucose-binding site is contributed by Asn317. At 329 to 334 the chain is on the cytoplasmic side; it reads ERAGRR. Residues 335-355 form a helical membrane-spanning segment; that stretch reads TLHLIGLAGMAGCAVLMTIAL. Topologically, residues 356 to 365 are extracellular; sequence ALLERLPWMS. Residues 366–388 form a helical membrane-spanning segment; it reads YLSIVAIFGFVAFFEVGPGPIPW. D-glucose is bound by residues Glu380 and Trp388. The Cytoplasmic portion of the chain corresponds to 389–401; the sequence is FIVAELFSQGPRP. The helical transmembrane segment at 402–422 threads the bilayer; sequence AAIAVAGFSNWTSNFIVGMCF. Topologically, residues 423–429 are extracellular; it reads QYVEQLC. Residues 430 to 450 form a helical membrane-spanning segment; that stretch reads GPYVFIIFTVLLVLFFIFTYF. At 451 to 492 the chain is on the cytoplasmic side; that stretch reads KVPETKGRTFDEIASGFRQGGASQSDKTPEELFHPLGADSQV. The residue at position 465 (Ser465) is a Phosphoserine. The tract at residues 468–492 is disordered; sequence RQGGASQSDKTPEELFHPLGADSQV. The residue at position 478 (Thr478) is a Phosphothreonine. Ser490 bears the Phosphoserine mark.

Belongs to the major facilitator superfamily. Sugar transporter (TC 2.A.1.1) family. Glucose transporter subfamily. Found in a complex with ADD2, DMTN and SLC2A1. Interacts (via C-terminus cytoplasmic region) with DMTN. Interacts with SNX27; the interaction is required when endocytosed to prevent degradation in lysosomes and promote recycling to the plasma membrane. Interacts with GIPC (via PDZ domain). Interacts with STOM. Interacts with SGTA (via Gln-rich region). Interacts with BSG. Interacts with SMIM43; the interaction may promote SLC2A1-mediated glucose transport to meet the energy needs of mesendoderm differentiation. Post-translationally, phosphorylation at Ser-226 by PKC promotes glucose uptake by increasing cell membrane localization. In terms of tissue distribution, detected in brain capillary (at protein level). Detected in brain capillary.

Its subcellular location is the cell membrane. It localises to the photoreceptor inner segment. The enzyme catalyses D-glucose(out) = D-glucose(in). The uptake of glucose is inhibited by cytochalasin B. Glucose uptake is increased in response to phorbol ester 12-O-tetradecanoylphorbol-13-acetate (TPA) treatment: TPA-induced glucose uptake requires phosphorylation at Ser-226. Its function is as follows. Facilitative glucose transporter, which is responsible for constitutive or basal glucose uptake. Has a very broad substrate specificity; can transport a wide range of aldoses including both pentoses and hexoses. Most important energy carrier of the brain: present at the blood-brain barrier and assures the energy-independent, facilitative transport of glucose into the brain. In association with BSG and NXNL1, promotes retinal cone survival by increasing glucose uptake into photoreceptors. Required for mesendoderm differentiation. The chain is Solute carrier family 2, facilitated glucose transporter member 1 from Bos taurus (Bovine).